A 408-amino-acid chain; its full sequence is Phosphoglycerate kinase (408 aa).

Residues 28–30 (DIN), R43, 66–69 (HQGR), R123, and R163 each bind substrate. Residues E334 and 358-361 (GGHT) each bind ATP.

This sequence belongs to the phosphoglycerate kinase family. In terms of assembly, monomer.

It localises to the cytoplasm. The enzyme catalyses (2R)-3-phosphoglycerate + ATP = (2R)-3-phospho-glyceroyl phosphate + ADP. The protein operates within carbohydrate degradation; glycolysis; pyruvate from D-glyceraldehyde 3-phosphate: step 2/5. This chain is Phosphoglycerate kinase, found in Pyrobaculum aerophilum (strain ATCC 51768 / DSM 7523 / JCM 9630 / CIP 104966 / NBRC 100827 / IM2).